A 133-amino-acid polypeptide reads, in one-letter code: MGMTSDTIADLLTRIRNALKAEHLYVDLEHSKMREAIVKILKQHGFLAHYLIKEEHRKRTMRIFLQYTNDRKPVIRQLKRVSKPSRRVYVPAAKIPYVFGNMGISVLSTSQGVLDGSTARAKNIGGELLCLVW.

Belongs to the universal ribosomal protein uS8 family. As to quaternary structure, part of the 30S ribosomal subunit. Contacts proteins S5 and S12.

Functionally, one of the primary rRNA binding proteins, it binds directly to 16S rRNA central domain where it helps coordinate assembly of the platform of the 30S subunit. This chain is Small ribosomal subunit protein uS8, found in Chlamydia abortus (strain DSM 27085 / S26/3) (Chlamydophila abortus).